Reading from the N-terminus, the 305-residue chain is Acetyl-coenzyme A carboxylase carboxyl transferase subunit beta (305 aa).

The CoA carboxyltransferase N-terminal domain occupies 27–296 (LWVKCSACRE…PAAKADLAAR (270 aa)). Zn(2+)-binding residues include Cys31, Cys34, Cys50, and Cys53. The segment at 31–53 (CSACRELIYKKQLNDNLKVCPKC) adopts a C4-type zinc-finger fold.

This sequence belongs to the AccD/PCCB family. As to quaternary structure, acetyl-CoA carboxylase is a heterohexamer composed of biotin carboxyl carrier protein (AccB), biotin carboxylase (AccC) and two subunits each of ACCase subunit alpha (AccA) and ACCase subunit beta (AccD). The cofactor is Zn(2+).

It localises to the cytoplasm. The enzyme catalyses N(6)-carboxybiotinyl-L-lysyl-[protein] + acetyl-CoA = N(6)-biotinyl-L-lysyl-[protein] + malonyl-CoA. It participates in lipid metabolism; malonyl-CoA biosynthesis; malonyl-CoA from acetyl-CoA: step 1/1. Functionally, component of the acetyl coenzyme A carboxylase (ACC) complex. Biotin carboxylase (BC) catalyzes the carboxylation of biotin on its carrier protein (BCCP) and then the CO(2) group is transferred by the transcarboxylase to acetyl-CoA to form malonyl-CoA. The protein is Acetyl-coenzyme A carboxylase carboxyl transferase subunit beta of Chloroflexus aggregans (strain MD-66 / DSM 9485).